The following is a 96-amino-acid chain: Protein transport protein Sec61 subunit beta (96 aa).

The span at 1-17 (MPGPTPSGTNVGSSGRS) shows a compositional bias: polar residues. Residues 1–54 (MPGPTPSGTNVGSSGRSPSKAVAARAAGSTVRQRKNASCGTRSAGRTTSAGTGG) form a disordered region. Residue Pro2 is modified to N-acetylproline. The Cytoplasmic segment spans residues 2–70 (PGPTPSGTNV…EDSPGLKVGP (69 aa)). Ser7 is subject to Phosphoserine. The residue at position 9 (Thr9) is a Phosphothreonine. Ser13, Ser14, and Ser17 each carry phosphoserine. Residue Cys39 is the site of S-palmitoyl cysteine attachment. A compositionally biased stretch (low complexity) spans 40–50 (GTRSAGRTTSA). A helical transmembrane segment spans residues 71–91 (VPVLVMSLLFIAAVFMLHIWG).

This sequence belongs to the SEC61-beta family. The SEC61 channel-forming translocon complex consists of channel-forming core components SEC61A1, SEC61B and SEC61G and different auxiliary components such as SEC62 and SEC63. The SEC61 channel associates with the multi-pass translocon (MPT) complex. Interacts with TRAM1.

The protein localises to the endoplasmic reticulum membrane. Functionally, component of SEC61 channel-forming translocon complex that mediates transport of signal peptide-containing precursor polypeptides across the endoplasmic reticulum (ER). Forms a ribosome receptor and a gated pore in the ER membrane, both functions required for cotranslational translocation of nascent polypeptides. The SEC61 channel is also involved in ER membrane insertion of transmembrane proteins: it mediates membrane insertion of the first few transmembrane segments of proteins, while insertion of subsequent transmembrane regions of multi-pass membrane proteins is mediated by the multi-pass translocon (MPT) complex. The SEC61 channel cooperates with the translocating protein TRAM1 to import nascent proteins into the ER. Required for PKD1/Polycystin-1 biogenesis. The sequence is that of Protein transport protein Sec61 subunit beta from Mus musculus (Mouse).